A 465-amino-acid chain; its full sequence is UDP-N-acetylmuramate--L-alanine ligase (465 aa).

125–131 contributes to the ATP binding site; sequence GTHGKTT.

Belongs to the MurCDEF family.

The protein resides in the cytoplasm. The enzyme catalyses UDP-N-acetyl-alpha-D-muramate + L-alanine + ATP = UDP-N-acetyl-alpha-D-muramoyl-L-alanine + ADP + phosphate + H(+). The protein operates within cell wall biogenesis; peptidoglycan biosynthesis. In terms of biological role, cell wall formation. This chain is UDP-N-acetylmuramate--L-alanine ligase, found in Deinococcus geothermalis (strain DSM 11300 / CIP 105573 / AG-3a).